An 83-amino-acid chain; its full sequence is MKASMFLALAGLVLLFVVGYASESEEKEFPIELLSKIFAVDVFKGEERGCKGFGDSCTPGKNECCPDHACSNKHKWCKVYLGK.

Positions 1–21 (MKASMFLALAGLVLLFVVGYA) are cleaved as a signal peptide. Residues 22-48 (SESEEKEFPIELLSKIFAVDVFKGEER) constitute a propeptide that is removed on maturation. Disulfide bonds link Cys50/Cys65, Cys57/Cys70, and Cys64/Cys77. A Leucine amide modification is found at Leu81.

It belongs to the neurotoxin 10 (Hwtx-1) family. 15 (Hntx-3) subfamily. In terms of assembly, monomer. Expressed by the venom gland.

The protein localises to the secreted. Lethal neurotoxin. Selectively blocks tetrodotoxin-sensitive voltage-gated sodium channels (Nav). Does not affect tetrodotoxin-resistant voltage-gated sodium channels or calcium channels. The protein is Mu-theraphotoxin-Hhn2l of Cyriopagopus hainanus (Chinese bird spider).